The sequence spans 163 residues: Beta-carbonic anhydrase 1 (163 aa).

Zn(2+)-binding residues include Cys-35, Asp-37, His-88, and Cys-91.

Belongs to the beta-class carbonic anhydrase family. Homotetramer. Zn(2+) serves as cofactor.

The catalysed reaction is hydrogencarbonate + H(+) = CO2 + H2O. In terms of biological role, catalyzes the reversible hydration of carbon dioxide to form bicarbonate. The polypeptide is Beta-carbonic anhydrase 1 (Mycobacterium bovis (strain ATCC BAA-935 / AF2122/97)).